We begin with the raw amino-acid sequence, 98 residues long: Large ribosomal subunit protein bL28 (98 aa).

This sequence belongs to the bacterial ribosomal protein bL28 family.

This Rhizobium etli (strain ATCC 51251 / DSM 11541 / JCM 21823 / NBRC 15573 / CFN 42) protein is Large ribosomal subunit protein bL28.